Consider the following 459-residue polypeptide: ATP synthase subunit beta (459 aa).

Residue 149 to 156 (GGAGVGKT) participates in ATP binding.

This sequence belongs to the ATPase alpha/beta chains family. F-type ATPases have 2 components, CF(1) - the catalytic core - and CF(0) - the membrane proton channel. CF(1) has five subunits: alpha(3), beta(3), gamma(1), delta(1), epsilon(1). CF(0) has three main subunits: a(1), b(2) and c(9-12). The alpha and beta chains form an alternating ring which encloses part of the gamma chain. CF(1) is attached to CF(0) by a central stalk formed by the gamma and epsilon chains, while a peripheral stalk is formed by the delta and b chains.

Its subcellular location is the cell inner membrane. It catalyses the reaction ATP + H2O + 4 H(+)(in) = ADP + phosphate + 5 H(+)(out). Its function is as follows. Produces ATP from ADP in the presence of a proton gradient across the membrane. The catalytic sites are hosted primarily by the beta subunits. This Pseudomonas savastanoi pv. phaseolicola (strain 1448A / Race 6) (Pseudomonas syringae pv. phaseolicola (strain 1448A / Race 6)) protein is ATP synthase subunit beta.